The primary structure comprises 341 residues: UDP-3-O-acylglucosamine N-acyltransferase (341 aa).

Histidine 239 functions as the Proton acceptor in the catalytic mechanism.

Belongs to the transferase hexapeptide repeat family. LpxD subfamily. In terms of assembly, homotrimer.

The catalysed reaction is a UDP-3-O-[(3R)-3-hydroxyacyl]-alpha-D-glucosamine + a (3R)-hydroxyacyl-[ACP] = a UDP-2-N,3-O-bis[(3R)-3-hydroxyacyl]-alpha-D-glucosamine + holo-[ACP] + H(+). Its pathway is bacterial outer membrane biogenesis; LPS lipid A biosynthesis. Functionally, catalyzes the N-acylation of UDP-3-O-acylglucosamine using 3-hydroxyacyl-ACP as the acyl donor. Is involved in the biosynthesis of lipid A, a phosphorylated glycolipid that anchors the lipopolysaccharide to the outer membrane of the cell. This Photobacterium profundum (strain SS9) protein is UDP-3-O-acylglucosamine N-acyltransferase.